The following is a 342-amino-acid chain: Alpha-tocopherol transfer protein-like (342 aa).

The disordered stretch occupies residues 1–31 (MSEESDSLRTSPSVASLSENELPPPPEPPGY). Residues 8–19 (LRTSPSVASLSE) are compositionally biased toward polar residues. Residues 117 to 282 (KPSALKDVLA…EYGGTAGELD (166 aa)) enclose the CRAL-TRIO domain.

In terms of biological role, may act as a protein that binds a hydrophobic ligand. The chain is Alpha-tocopherol transfer protein-like (TTPAL) from Homo sapiens (Human).